We begin with the raw amino-acid sequence, 581 residues long: Laccase-2 (581 aa).

A signal peptide spans 1-19; sequence MKYSTVFTALTALFAQASA. Plastocyanin-like domains follow at residues 74–191 and 197–353; these read SVEN…GPAT and DVGA…YDSS. Asn-77, Asn-93, and Asn-120 each carry an N-linked (GlcNAc...) asparagine glycan. Cu cation-binding residues include His-125, His-127, His-169, and His-171. The cysteines at positions 146 and 562 are disulfide-linked. N-linked (GlcNAc...) asparagine glycosylation is found at Asn-232, Asn-283, Asn-343, Asn-408, Asn-427, and Asn-441. The region spanning 413 to 547 is the Plastocyanin-like 3 domain; the sequence is LLDWSSPTTL…AMQFVESQSS (135 aa). Positions 464, 467, 469, 526, 527, 528, and 532 each coordinate Cu cation.

This sequence belongs to the multicopper oxidase family. Cu cation serves as cofactor.

The protein localises to the secreted. The catalysed reaction is 4 hydroquinone + O2 = 4 benzosemiquinone + 2 H2O. Lignin degradation and detoxification of lignin-derived products. The sequence is that of Laccase-2 (lcc2) from Botryotinia fuckeliana (Noble rot fungus).